We begin with the raw amino-acid sequence, 438 residues long: sn-glycerol-3-phosphate-binding periplasmic protein UgpB (438 aa).

The first 23 residues, 1 to 23, serve as a signal peptide directing secretion; the sequence is MKPLHYTASALALGLALMGNAQA. Sn-glycerol 3-phosphate-binding residues include tyrosine 65, glutamate 89, serine 144, serine 270, glycine 307, tyrosine 346, and arginine 397.

The protein belongs to the bacterial solute-binding protein 1 family. In terms of assembly, the complex is composed of two ATP-binding proteins (UgpC), two transmembrane proteins (UgpA and UgpE) and a solute-binding protein (UgpB).

It localises to the periplasm. Functionally, part of the ABC transporter complex UgpBAEC involved in sn-glycerol-3-phosphate (G3P) import. Binds G3P. The chain is sn-glycerol-3-phosphate-binding periplasmic protein UgpB (ugpB) from Shigella flexneri serotype 5b (strain 8401).